The chain runs to 322 residues: N-acetyl-gamma-glutamyl-phosphate reductase 2 (322 aa).

The active site involves Cys117.

This sequence belongs to the NAGSA dehydrogenase family. Type 2 subfamily.

The protein resides in the cytoplasm. The catalysed reaction is N-acetyl-L-glutamate 5-semialdehyde + phosphate + NADP(+) = N-acetyl-L-glutamyl 5-phosphate + NADPH + H(+). The protein operates within amino-acid biosynthesis; L-arginine biosynthesis; N(2)-acetyl-L-ornithine from L-glutamate: step 3/4. In terms of biological role, catalyzes the NADPH-dependent reduction of N-acetyl-5-glutamyl phosphate to yield N-acetyl-L-glutamate 5-semialdehyde. In Nostoc sp. (strain PCC 7120 / SAG 25.82 / UTEX 2576), this protein is N-acetyl-gamma-glutamyl-phosphate reductase 2.